A 297-amino-acid chain; its full sequence is N-acetylmuramic acid 6-phosphate etherase (297 aa).

In terms of domain architecture, SIS spans 55-218 (AAAALKAGGR…STGAMVKLGK (164 aa)). The Proton donor role is filled by Glu-83. Glu-114 is an active-site residue.

Belongs to the GCKR-like family. MurNAc-6-P etherase subfamily. Homodimer.

The enzyme catalyses N-acetyl-D-muramate 6-phosphate + H2O = N-acetyl-D-glucosamine 6-phosphate + (R)-lactate. It participates in amino-sugar metabolism; 1,6-anhydro-N-acetylmuramate degradation. The protein operates within amino-sugar metabolism; N-acetylmuramate degradation. It functions in the pathway cell wall biogenesis; peptidoglycan recycling. Functionally, specifically catalyzes the cleavage of the D-lactyl ether substituent of MurNAc 6-phosphate, producing GlcNAc 6-phosphate and D-lactate. Together with AnmK, is also required for the utilization of anhydro-N-acetylmuramic acid (anhMurNAc) either imported from the medium or derived from its own cell wall murein, and thus plays a role in cell wall recycling. This Serratia proteamaculans (strain 568) protein is N-acetylmuramic acid 6-phosphate etherase.